A 156-amino-acid chain; its full sequence is MNLNATIFFQMLVFFVLGWFTMKFVWPPLTKAIDERRQKIADGLAAAEKGKADLAQAQARVSLIEASAKSETHARIIEAEKQAASMIEQARREAEAERARIVAQAAQDAAQEVQRAREALRDDVAALAVKGAEQILKREVDARAHAELLNQLKAQL.

Residues 7-27 (IFFQMLVFFVLGWFTMKFVWP) form a helical membrane-spanning segment.

This sequence belongs to the ATPase B chain family. In terms of assembly, F-type ATPases have 2 components, F(1) - the catalytic core - and F(0) - the membrane proton channel. F(1) has five subunits: alpha(3), beta(3), gamma(1), delta(1), epsilon(1). F(0) has three main subunits: a(1), b(2) and c(10-14). The alpha and beta chains form an alternating ring which encloses part of the gamma chain. F(1) is attached to F(0) by a central stalk formed by the gamma and epsilon chains, while a peripheral stalk is formed by the delta and b chains.

The protein localises to the cell inner membrane. In terms of biological role, f(1)F(0) ATP synthase produces ATP from ADP in the presence of a proton or sodium gradient. F-type ATPases consist of two structural domains, F(1) containing the extramembraneous catalytic core and F(0) containing the membrane proton channel, linked together by a central stalk and a peripheral stalk. During catalysis, ATP synthesis in the catalytic domain of F(1) is coupled via a rotary mechanism of the central stalk subunits to proton translocation. Functionally, component of the F(0) channel, it forms part of the peripheral stalk, linking F(1) to F(0). In Bordetella pertussis (strain Tohama I / ATCC BAA-589 / NCTC 13251), this protein is ATP synthase subunit b.